Here is a 264-residue protein sequence, read N- to C-terminus: Thymidylate synthase (264 aa).

Arginine 21 lines the dUMP pocket. Histidine 51 lines the (6R)-5,10-methylene-5,6,7,8-tetrahydrofolate pocket. 126-127 lines the dUMP pocket; sequence RR. Cysteine 146 functions as the Nucleophile in the catalytic mechanism. DUMP is bound by residues 166–169, asparagine 177, and 207–209; these read RSCD and HLY. (6R)-5,10-methylene-5,6,7,8-tetrahydrofolate is bound at residue aspartate 169. Alanine 263 is a binding site for (6R)-5,10-methylene-5,6,7,8-tetrahydrofolate.

The protein belongs to the thymidylate synthase family. Bacterial-type ThyA subfamily. In terms of assembly, homodimer.

It is found in the cytoplasm. The catalysed reaction is dUMP + (6R)-5,10-methylene-5,6,7,8-tetrahydrofolate = 7,8-dihydrofolate + dTMP. The protein operates within pyrimidine metabolism; dTTP biosynthesis. Functionally, catalyzes the reductive methylation of 2'-deoxyuridine-5'-monophosphate (dUMP) to 2'-deoxythymidine-5'-monophosphate (dTMP) while utilizing 5,10-methylenetetrahydrofolate (mTHF) as the methyl donor and reductant in the reaction, yielding dihydrofolate (DHF) as a by-product. This enzymatic reaction provides an intracellular de novo source of dTMP, an essential precursor for DNA biosynthesis. The polypeptide is Thymidylate synthase (Shewanella baltica (strain OS223)).